Here is a 287-residue protein sequence, read N- to C-terminus: Maleylpyruvate hydrolase (287 aa).

Residues E143, E145, and D174 each contribute to the a divalent metal cation site.

The protein belongs to the FAH family. In terms of assembly, homodimer.

It catalyses the reaction 3-maleylpyruvate + H2O = maleate + pyruvate + H(+). With respect to regulation, activated by Mn(2+). Inhibited by Ni(2+), Cd(2+), Co(2+) or Cu(2+). Functionally, involved in the degradation of gentisate. Catalyzes the hydrolysis of 3-maleylpyruvate, the ring-cleavage product of gentisate. This is Maleylpyruvate hydrolase from Aquipseudomonas alcaligenes (Pseudomonas alcaligenes).